Consider the following 248-residue polypeptide: Ethylene-responsive transcription factor ERF026 (248 aa).

A DNA-binding region (AP2/ERF) is located at residues 89-145 (VYRGIRCRSGKWVSEIREPKKTTRVWLGTYPTPEMAAAAYDVAALALKGGDTLLNFP). A disordered region spans residues 225 to 248 (PPWMGSPPSDDSPENSDGESLWSY).

The protein belongs to the AP2/ERF transcription factor family. ERF subfamily.

It is found in the nucleus. In terms of biological role, probably acts as a transcriptional activator. Binds to the GCC-box pathogenesis-related promoter element. May be involved in the regulation of gene expression by stress factors and by components of stress signal transduction pathways. The chain is Ethylene-responsive transcription factor ERF026 (ERF026) from Arabidopsis thaliana (Mouse-ear cress).